The chain runs to 609 residues: Spore coat protein homolog 1 (609 aa).

The N-terminal stretch at methionine 1–alanine 17 is a signal peptide. 3 N-linked (GlcNAc...) asparagine glycosylation sites follow: asparagine 82, asparagine 397, and asparagine 440. Positions threonine 527 to tryptophan 547 are disordered. Residue serine 584 is the site of GPI-anchor amidated serine attachment. The propeptide at serine 585–phenylalanine 609 is removed in mature form.

Its subcellular location is the cell membrane. Its function is as follows. May play a role in cell adhesion. This chain is Spore coat protein homolog 1, found in Rhizopus delemar (strain RA 99-880 / ATCC MYA-4621 / FGSC 9543 / NRRL 43880) (Mucormycosis agent).